The primary structure comprises 947 residues: Bifunctional glutamine synthetase adenylyltransferase/adenylyl-removing enzyme (947 aa).

Residues 1–440 (MTPLSSPLSQ…VFNELIGDDE (440 aa)) form an adenylyl removase region. The tract at residues 450-947 (SEPWREVWQD…ASWRKWLVAV (498 aa)) is adenylyl transferase.

It belongs to the GlnE family. Requires Mg(2+) as cofactor.

The catalysed reaction is [glutamine synthetase]-O(4)-(5'-adenylyl)-L-tyrosine + phosphate = [glutamine synthetase]-L-tyrosine + ADP. It catalyses the reaction [glutamine synthetase]-L-tyrosine + ATP = [glutamine synthetase]-O(4)-(5'-adenylyl)-L-tyrosine + diphosphate. Involved in the regulation of glutamine synthetase GlnA, a key enzyme in the process to assimilate ammonia. When cellular nitrogen levels are high, the C-terminal adenylyl transferase (AT) inactivates GlnA by covalent transfer of an adenylyl group from ATP to specific tyrosine residue of GlnA, thus reducing its activity. Conversely, when nitrogen levels are low, the N-terminal adenylyl removase (AR) activates GlnA by removing the adenylyl group by phosphorolysis, increasing its activity. The regulatory region of GlnE binds the signal transduction protein PII (GlnB) which indicates the nitrogen status of the cell. In Salmonella paratyphi B (strain ATCC BAA-1250 / SPB7), this protein is Bifunctional glutamine synthetase adenylyltransferase/adenylyl-removing enzyme.